Reading from the N-terminus, the 325-residue chain is SAM pointed domain-containing Ets transcription factor (325 aa).

Disordered regions lie at residues 27–50 (GTEK…PPAT) and 79–100 (ARAG…SQAS). A PNT domain is found at 119 to 203 (EVLKDIETAC…AHLDIWKSAA (85 aa)). A DNA-binding region (ETS) is located at residues 239–322 (IHLWQFLKEL…ISQRLVYQFV (84 aa)).

It belongs to the ETS family. As to quaternary structure, interacts with the DNA-binding domain of the androgen receptor. Interacts with NKX3-1. Expressed in the accessory glands of sex organs including the prostate, seminal vesicle, coagulating gland in males, the oviduct in females, and in intestines. Expression is epithelial-specific.

It is found in the nucleus. Its function is as follows. May function as an androgen-independent transactivator of the prostate-specific antigen (PSA) promoter. Binds to 5'-GGAT-3' DNA sequences. May play a role in the regulation of the prostate gland and/or prostate cancer development. Acts as a transcriptional activator for SERPINB5 promoter. This is SAM pointed domain-containing Ets transcription factor (Spdef) from Mus musculus (Mouse).